Reading from the N-terminus, the 70-residue chain is DNA-directed RNA polymerase subunit epsilon (70 aa).

This sequence belongs to the RNA polymerase subunit epsilon family. RNAP is composed of a core of 2 alpha, a beta and a beta' subunit. The core is associated with a delta subunit, and at least one of epsilon or omega. When a sigma factor is associated with the core the holoenzyme is formed, which can initiate transcription.

The catalysed reaction is RNA(n) + a ribonucleoside 5'-triphosphate = RNA(n+1) + diphosphate. In terms of biological role, a non-essential component of RNA polymerase (RNAP). The chain is DNA-directed RNA polymerase subunit epsilon from Leuconostoc mesenteroides subsp. mesenteroides (strain ATCC 8293 / DSM 20343 / BCRC 11652 / CCM 1803 / JCM 6124 / NCDO 523 / NBRC 100496 / NCIMB 8023 / NCTC 12954 / NRRL B-1118 / 37Y).